Reading from the N-terminus, the 846-residue chain is Leucine--tRNA ligase (846 aa).

Positions 42-52 (PYPSGNLHMGH) match the 'HIGH' region motif. The 'KMSKS' region signature appears at 586 to 590 (KMSKS). Lysine 589 is a binding site for ATP.

This sequence belongs to the class-I aminoacyl-tRNA synthetase family.

Its subcellular location is the cytoplasm. It catalyses the reaction tRNA(Leu) + L-leucine + ATP = L-leucyl-tRNA(Leu) + AMP + diphosphate. The polypeptide is Leucine--tRNA ligase (Heliobacterium modesticaldum (strain ATCC 51547 / Ice1)).